The chain runs to 567 residues: Platelet glycoprotein V (567 aa).

Positions 1–16 (MLRSALLSAVLPLLRA) are cleaved as a signal peptide. The 34-residue stretch at 17–50 (QPFPCPKTCKCVVRDAAQCSGGSVAHIAELGLPT) folds into the LRRNT domain. The Extracellular segment spans residues 17-522 (QPFPCPKTCK…ESPNNRLYWG (506 aa)). Asparagine 51 and asparagine 67 each carry an N-linked (GlcNAc...) asparagine glycan. 14 LRR repeats span residues 75 to 96 (VLQR…TFND), 99 to 120 (KLKT…ILDK), 123 to 144 (LLEQ…LFQQ), 147 to 168 (NLQE…LFSS), 171 to 193 (ELKL…LGAQ), 195 to 216 (KLEK…LLSN), 219 to 240 (ALTE…AFDR), 243 to 264 (NLSS…LFLH), 267 to 288 (SVSR…LFGE), 291 to 312 (GLRE…AFRN), 315 to 337 (GLQT…VFQG), 340 to 361 (ELRV…ALRG), 364 to 385 (HLRQ…LFRN), and 388 to 409 (SLES…VFAA). Residue asparagine 181 is glycosylated (N-linked (GlcNAc...) asparagine). N-linked (GlcNAc...) asparagine glycosylation is present at asparagine 243. 2 N-linked (GlcNAc...) asparagine glycosylation sites follow: asparagine 298 and asparagine 312. Residue asparagine 385 is glycosylated (N-linked (GlcNAc...) asparagine). The LRRCT domain occupies 421-474 (NPWLCDCGLWRFLQWLRHHPDILGRDEPPQCRGPEPRASLSFWELLQGDPWCPD). A helical membrane pass occupies residues 523-543 (LYILLLVAQAIIAAFIVFAMI). Over 544–567 (KIGQLFRTLIREKLLLEAMGKSCN) the chain is Cytoplasmic.

Its subcellular location is the membrane. Functionally, the GPIb-V-IX complex functions as the vWF receptor and mediates vWF-dependent platelet adhesion to blood vessels. The adhesion of platelets to injured vascular surfaces in the arterial circulation is a critical initiating event in hemostasis. This chain is Platelet glycoprotein V (Gp5), found in Mus musculus (Mouse).